The sequence spans 368 residues: Protein pxr1 (368 aa).

Disordered stretches follow at residues 1–28 (MGLA…TDSF) and 161–339 (KEKA…PMGI). Polar residues predominate over residues 15–27 (DPNNTRWSGNTDS). Residues 25-79 (TDSFGHRMMKSQGWTPGEYLGAKDAAHAEFHTEANASHIRVVIKDNTLGLGAKIG) form the G-patch domain. Over residues 168–182 (SSEESDSSSDEEEEK) the composition is skewed to acidic residues. Composition is skewed to basic residues over residues 209–226 (SKKS…KSKK), 242–254 (KSKK…KSKS), 271–283 (KARK…KKRK), and 301–312 (SSKKSKKDKHKS). Residues 313–324 (PSTSKTSTKEST) are compositionally biased toward low complexity. Residues 325–334 (PIVSESSGRS) show a composition bias toward polar residues.

Belongs to the PINX1 family.

Its subcellular location is the nucleus. The protein resides in the nucleolus. Functionally, involved in rRNA-processing at A0, A1 and A2 sites and negatively regulates telomerase. The sequence is that of Protein pxr1 (pxr1) from Botryotinia fuckeliana (strain B05.10) (Noble rot fungus).